We begin with the raw amino-acid sequence, 235 residues long: Large ribosomal subunit protein uL1 (235 aa).

Belongs to the universal ribosomal protein uL1 family. Part of the 50S ribosomal subunit.

In terms of biological role, binds directly to 23S rRNA. The L1 stalk is quite mobile in the ribosome, and is involved in E site tRNA release. Functionally, protein L1 is also a translational repressor protein, it controls the translation of the L11 operon by binding to its mRNA. This chain is Large ribosomal subunit protein uL1, found in Synechococcus sp. (strain CC9311).